A 32-amino-acid polypeptide reads, in one-letter code: Cytochrome b6-f complex subunit 7 (32 aa).

Residues 9–27 (AAVFWVLIPVGLLGGAILL) form a helical membrane-spanning segment.

This sequence belongs to the PetM family. In terms of assembly, the 4 large subunits of the cytochrome b6-f complex are cytochrome b6, subunit IV (17 kDa polypeptide, PetD), cytochrome f and the Rieske protein, while the 4 small subunits are PetG, PetL, PetM and PetN. The complex functions as a dimer.

It localises to the cellular thylakoid membrane. Component of the cytochrome b6-f complex, which mediates electron transfer between photosystem II (PSII) and photosystem I (PSI), cyclic electron flow around PSI, and state transitions. This Prochlorococcus marinus (strain MIT 9211) protein is Cytochrome b6-f complex subunit 7.